The chain runs to 1174 residues: Ankyrin repeat and LEM domain-containing protein 2 homolog (1174 aa).

4 stretches are compositionally biased toward low complexity: residues 37 to 56 (NPAS…SAAS), 150 to 164 (SSPT…SSPT), 174 to 198 (LGSN…SSSN), and 205 to 219 (QQQM…PQQP). 2 disordered regions span residues 37 to 74 (NPAS…YEDP) and 141 to 230 (PIIS…PFRA). One copy of the ANK repeat lies at 338-367 (RGETPLHFAAKNGHVAMVEVLVSYPECKSL). Disordered stretches follow at residues 519 to 543 (AEAT…HNNN) and 961 to 981 (GSSS…SPGI). The segment covering 521–532 (ATSSPKPTKNVP) has biased composition (polar residues). Residues 533–543 (NGTNECEHNNN) are compositionally biased toward low complexity.

It belongs to the ANKLE2 family.

It is found in the endoplasmic reticulum. It localises to the nucleus envelope. Its subcellular location is the cytoplasm. Involved in brain development probably by regulating asymmetric division of neuroblasts. Regulates neuroblast asymmetric cell division by controlling asymmetric protein localization of Mira, Baz, Par-6 and aPKC, and spindle alignment. Also, regulates the localization of kinase Ball during mitosis, specifically maintaining Ball in the nucleus during interphase. Required for proper ER and nuclear envelope morphology in neuroblasts. This is Ankyrin repeat and LEM domain-containing protein 2 homolog from Drosophila melanogaster (Fruit fly).